We begin with the raw amino-acid sequence, 196 residues long: ATP-dependent Clp protease proteolytic subunit (196 aa).

The active-site Nucleophile is S99. Residue H124 is part of the active site.

It belongs to the peptidase S14 family. As to quaternary structure, fourteen ClpP subunits assemble into 2 heptameric rings which stack back to back to give a disk-like structure with a central cavity, resembling the structure of eukaryotic proteasomes.

It localises to the cytoplasm. It catalyses the reaction Hydrolysis of proteins to small peptides in the presence of ATP and magnesium. alpha-casein is the usual test substrate. In the absence of ATP, only oligopeptides shorter than five residues are hydrolyzed (such as succinyl-Leu-Tyr-|-NHMec, and Leu-Tyr-Leu-|-Tyr-Trp, in which cleavage of the -Tyr-|-Leu- and -Tyr-|-Trp bonds also occurs).. Its function is as follows. Cleaves peptides in various proteins in a process that requires ATP hydrolysis. Has a chymotrypsin-like activity. Plays a major role in the degradation of misfolded proteins. In Helicobacter hepaticus (strain ATCC 51449 / 3B1), this protein is ATP-dependent Clp protease proteolytic subunit.